The chain runs to 434 residues: GTPase Der (434 aa).

2 EngA-type G domains span residues 3 to 167 (NIVA…PEIE) and 175 to 350 (PRFA…ESRS). Residues 9 to 16 (GRPNVGKS), 56 to 60 (DTGGY), 119 to 122 (NKVD), 181 to 188 (GRPNAGKS), 228 to 232 (DTAGI), and 293 to 296 (NKWD) each bind GTP. Residues 351 to 434 (KKIKTRQFND…VPISIFFRKK (84 aa)) form the KH-like domain.

Belongs to the TRAFAC class TrmE-Era-EngA-EngB-Septin-like GTPase superfamily. EngA (Der) GTPase family. In terms of assembly, associates with the 50S ribosomal subunit.

GTPase that plays an essential role in the late steps of ribosome biogenesis. In Christiangramia forsetii (strain DSM 17595 / CGMCC 1.15422 / KT0803) (Gramella forsetii), this protein is GTPase Der.